The sequence spans 266 residues: Glutamate racemase (266 aa).

Substrate-binding positions include 9–10 and 41–42; these read DS and YG. Residue Cys-72 is the Proton donor/acceptor of the active site. Residue 73–74 coordinates substrate; that stretch reads NT. The active-site Proton donor/acceptor is Cys-184. 185–186 lines the substrate pocket; it reads TH.

This sequence belongs to the aspartate/glutamate racemases family.

The catalysed reaction is L-glutamate = D-glutamate. Its pathway is cell wall biogenesis; peptidoglycan biosynthesis. Provides the (R)-glutamate required for cell wall biosynthesis. The chain is Glutamate racemase from Staphylococcus haemolyticus (strain JCSC1435).